Here is a 138-residue protein sequence, read N- to C-terminus: Acidic phospholipase A2 Ts-A1 (138 aa).

An N-terminal signal peptide occupies residues 1–16 (MRTLWIMAVLQVGVEG). 7 disulfides stabilise this stretch: C42-C131, C44-C60, C59-C111, C65-C138, C66-C104, C73-C97, and C91-C102. 3 residues coordinate Ca(2+): F43, G45, and G47. H63 is a catalytic residue. A Ca(2+)-binding site is contributed by D64. D105 is a catalytic residue.

Requires Ca(2+) as cofactor. Expressed by the venom gland.

The protein localises to the secreted. It carries out the reaction a 1,2-diacyl-sn-glycero-3-phosphocholine + H2O = a 1-acyl-sn-glycero-3-phosphocholine + a fatty acid + H(+). Its function is as follows. Snake venom phospholipase A2 (PLA2) that shows a moderate inhibition of ADP-induced human platelet aggregation when tested on platelet rich plasma. Exhibits high hydrolytic activities and prefers the anionic micelles (dPPC with deoxycholate) to the zwitterionic micelles (dPPC with Triton X-100). PLA2 catalyzes the calcium-dependent hydrolysis of the 2-acyl groups in 3-sn-phosphoglycerides. The polypeptide is Acidic phospholipase A2 Ts-A1 (Trimeresurus stejnegeri (Chinese green tree viper)).